Consider the following 316-residue polypeptide: C1GALT1-specific chaperone 1 (316 aa).

Residues 1–6 (MLSESS) lie on the Cytoplasmic side of the membrane. Residues 7-26 (SFLKGVMLGSIFCALITMLG) form a helical; Signal-anchor for type II membrane protein membrane-spanning segment. Residues 27 to 316 (HIRIGNRMHH…FLPPNGSEND (290 aa)) lie on the Lumenal side of the membrane.

This sequence belongs to the glycosyltransferase 31 family. Beta3-Gal-T subfamily. In terms of assembly, associates with core 1 beta-3-galactosyltransferase (C1GALT1), probably not with the soluble active form.

It is found in the membrane. In terms of biological role, probable chaperone required for the generation of 1 O-glycan Gal-beta1-3GalNAc-alpha1-Ser/Thr (T antigen), which is a precursor for many extended O-glycans in glycoproteins. Probably acts as a specific molecular chaperone assisting the folding/stability of core 1 beta-3-galactosyltransferase (C1GALT1). This chain is C1GALT1-specific chaperone 1 (C1galt1c1), found in Mus musculus (Mouse).